The chain runs to 191 residues: Ribonuclease HII (191 aa).

Residues Ile16–Leu191 enclose the RNase H type-2 domain. 3 residues coordinate a divalent metal cation: Asp22, Glu23, and Asp110.

This sequence belongs to the RNase HII family. Requires Mn(2+) as cofactor. Mg(2+) serves as cofactor.

It is found in the cytoplasm. It carries out the reaction Endonucleolytic cleavage to 5'-phosphomonoester.. Its function is as follows. Endonuclease that specifically degrades the RNA of RNA-DNA hybrids. In Campylobacter jejuni subsp. jejuni serotype O:6 (strain 81116 / NCTC 11828), this protein is Ribonuclease HII.